Reading from the N-terminus, the 519-residue chain is 2-isopropylmalate synthase (519 aa).

Residues 12–274 (IRIFDTTLRD…DTSIHTSRIV (263 aa)) enclose the Pyruvate carboxyltransferase domain. D21, H209, H211, and N245 together coordinate Mn(2+). The tract at residues 396–519 (RLASMTISDV…MQNKQNTALA (124 aa)) is regulatory domain.

It belongs to the alpha-IPM synthase/homocitrate synthase family. LeuA type 1 subfamily. As to quaternary structure, homodimer. Mn(2+) serves as cofactor.

It is found in the cytoplasm. The enzyme catalyses 3-methyl-2-oxobutanoate + acetyl-CoA + H2O = (2S)-2-isopropylmalate + CoA + H(+). It functions in the pathway amino-acid biosynthesis; L-leucine biosynthesis; L-leucine from 3-methyl-2-oxobutanoate: step 1/4. Catalyzes the condensation of the acetyl group of acetyl-CoA with 3-methyl-2-oxobutanoate (2-ketoisovalerate) to form 3-carboxy-3-hydroxy-4-methylpentanoate (2-isopropylmalate). This Xylella fastidiosa (strain M23) protein is 2-isopropylmalate synthase.